Reading from the N-terminus, the 353-residue chain is Protein-glutamate methylesterase/protein-glutamine glutaminase (353 aa).

The Response regulatory domain maps to 6 to 123; the sequence is RVLVIDDSAL…ARGLKAMLSE (118 aa). At Asp57 the chain carries 4-aspartylphosphate. Positions 159 to 351 constitute a CheB-type methylesterase domain; sequence AESTDKVIAI…PRIVDLLSER (193 aa). Active-site residues include Ser171, His197, and Asp293.

This sequence belongs to the CheB family. Post-translationally, phosphorylated by CheA. Phosphorylation of the N-terminal regulatory domain activates the methylesterase activity.

The protein localises to the cytoplasm. The catalysed reaction is [protein]-L-glutamate 5-O-methyl ester + H2O = L-glutamyl-[protein] + methanol + H(+). It catalyses the reaction L-glutaminyl-[protein] + H2O = L-glutamyl-[protein] + NH4(+). In terms of biological role, involved in chemotaxis. Part of a chemotaxis signal transduction system that modulates chemotaxis in response to various stimuli. Catalyzes the demethylation of specific methylglutamate residues introduced into the chemoreceptors (methyl-accepting chemotaxis proteins or MCP) by CheR. Also mediates the irreversible deamidation of specific glutamine residues to glutamic acid. This chain is Protein-glutamate methylesterase/protein-glutamine glutaminase, found in Syntrophotalea carbinolica (strain DSM 2380 / NBRC 103641 / GraBd1) (Pelobacter carbinolicus).